The sequence spans 230 residues: uncharacterized protein (230 aa).

The HTH gntR-type domain maps to 12–80 (KNLSYVLAEK…PRIGTRVMPQ (69 aa)). The segment at residues 40–59 (EIELGEQFGVSRTAVREAVK) is a DNA-binding region (H-T-H motif).

This is an uncharacterized protein from Escherichia coli (strain K12).